The chain runs to 244 residues: Phosphoadenosine 5'-phosphosulfate reductase (244 aa).

C239 functions as the Nucleophile; cysteine thiosulfonate intermediate in the catalytic mechanism.

This sequence belongs to the PAPS reductase family. CysH subfamily.

The protein localises to the cytoplasm. It catalyses the reaction [thioredoxin]-disulfide + sulfite + adenosine 3',5'-bisphosphate + 2 H(+) = [thioredoxin]-dithiol + 3'-phosphoadenylyl sulfate. It functions in the pathway sulfur metabolism; hydrogen sulfide biosynthesis; sulfite from sulfate: step 3/3. Catalyzes the formation of sulfite from phosphoadenosine 5'-phosphosulfate (PAPS) using thioredoxin as an electron donor. This Serratia proteamaculans (strain 568) protein is Phosphoadenosine 5'-phosphosulfate reductase.